A 543-amino-acid polypeptide reads, in one-letter code: Sodium/glucose cotransporter (543 aa).

Transmembrane regions (helical) follow at residues 10–30, 45–65, 79–99, 129–149, 156–176, 193–213, 246–266, 287–307, 345–365, 401–421, 427–447, 455–475, 483–503, and 523–543; these read FIDI…GLWV, FLAG…AANI, SIGL…IIVG, ILAV…VLYL, TILG…ALVY, VFFL…FIGG, LPGI…YWGF, IVFA…PGIA, FLPV…IVSS, TAAV…GGIG, IQEY…LGLF, GAII…FMPL, MLYT…STSI, and SFNI…TLFW.

Its subcellular location is the cell membrane. Functionally, actively transports glucose into cells by Na(+) cotransport. The chain is Sodium/glucose cotransporter (sglT) from Vibrio parahaemolyticus.